Reading from the N-terminus, the 626-residue chain is Chaperone protein HtpG (626 aa).

The a; substrate-binding stretch occupies residues 1–341; it reads METKQFKAES…SEDLSLNISR (341 aa). The b stretch occupies residues 342–552; that stretch reads EILQHDRQLK…EGELSIEMEK (211 aa). The interval 490–509 is disordered; it reads DLGIEGEEKENTSNSDDKEN. Over residues 498 to 509 the composition is skewed to basic and acidic residues; it reads KENTSNSDDKEN. The interval 553–626 is c; sequence VLNAMPNNQN…FTNNICKIMK (74 aa).

This sequence belongs to the heat shock protein 90 family. Homodimer.

The protein resides in the cytoplasm. In terms of biological role, molecular chaperone. Has ATPase activity. The polypeptide is Chaperone protein HtpG (Clostridium botulinum (strain ATCC 19397 / Type A)).